Consider the following 212-residue polypeptide: MRTGEVAEAVPRVVAILSSLLQRVAERNDAAAAAAAVGEEAAAVSAFQGLTKPAISIGGYLERIFRFANCSPSCYVVAYIYLDRFLRRRPALAVDSFNVHRLLITSVLTAVKFVDDICYNNAYFARVGGISLMEMNYLEVDFLFGIAFDLNVTPAAFASYCAVLQSEMTYLEQPPAVDLPRLHCCPSDQDDAGCHHKQQQQQQQQQQHQLAV.

Belongs to the cyclin family. Cyclin U/P subfamily.

This is Cyclin-P4-1 (CYCP4-1) from Oryza sativa subsp. japonica (Rice).